Consider the following 346-residue polypeptide: Very-long-chain 3-oxoacyl-CoA reductase (346 aa).

The helical transmembrane segment at 26–46 (SAYFLLAAGSLFVASRALTFV) threads the bilayer. Residues Val71, Asp126, Asp134, Asn153, Tyr220, Lys224, Ile253, and Ser255 each contribute to the NADP(+) site. Tyr220 (proton donor) is an active-site residue. Residue Lys224 is the Lowers pKa of active site Tyr of the active site.

It belongs to the short-chain dehydrogenases/reductases (SDR) family.

The protein localises to the endoplasmic reticulum membrane. The catalysed reaction is a very-long-chain (3R)-3-hydroxyacyl-CoA + NADP(+) = a very-long-chain 3-oxoacyl-CoA + NADPH + H(+). Its pathway is lipid metabolism; fatty acid biosynthesis. Functionally, component of the microsomal membrane bound fatty acid elongation system, which produces the 26-carbon very long-chain fatty acids (VLCFA) from palmitate. Catalyzes the reduction of the 3-ketoacyl-CoA intermediate that is formed in each cycle of fatty acid elongation. VLCFAs serve as precursors for ceramide and sphingolipids. The protein is Very-long-chain 3-oxoacyl-CoA reductase of Aspergillus oryzae (strain ATCC 42149 / RIB 40) (Yellow koji mold).